The sequence spans 169 residues: Sorting nexin-24 (169 aa).

Met1 carries the N-acetylmethionine modification. The 125-residue stretch at 1 to 125 folds into the PX domain; that stretch reads MEVYIPSFRY…SFDETESEES (125 aa). Positions 38, 40, 61, and 74 each coordinate a 1,2-diacyl-sn-glycero-3-phospho-(1D-myo-inositol-3-phosphate). Residues Ser113 and Ser116 each carry the phosphoserine modification.

This sequence belongs to the sorting nexin family.

The protein localises to the cytoplasmic vesicle membrane. Functionally, may be involved in several stages of intracellular trafficking. The chain is Sorting nexin-24 (SNX24) from Homo sapiens (Human).